A 206-amino-acid chain; its full sequence is MLKKLDSLLTVAGITLPDQQKHQLIGYVELLDKWNKAYNLTSVRDPQQMLVRHILDSIVVNPHLQGSRFIDVGTGPGLPGIPLAIVRPDAHFTLLDSLGKRVRFLRQVQHELGLNNIEPVQSRVEAFTSEPPFDGVISRAFASLQDMLSWCHHLPAKPEGRFYALKGVRPDDELAVLPEDIVLESVIKLDVPELDGERHLIILKSN.

Residues G73, L78, 124–125, and R139 contribute to the S-adenosyl-L-methionine site; that span reads VE.

This sequence belongs to the methyltransferase superfamily. RNA methyltransferase RsmG family.

Its subcellular location is the cytoplasm. The enzyme catalyses guanosine(527) in 16S rRNA + S-adenosyl-L-methionine = N(7)-methylguanosine(527) in 16S rRNA + S-adenosyl-L-homocysteine. In terms of biological role, specifically methylates the N7 position of guanine in position 527 of 16S rRNA. In Yersinia pseudotuberculosis serotype O:1b (strain IP 31758), this protein is Ribosomal RNA small subunit methyltransferase G.